We begin with the raw amino-acid sequence, 308 residues long: Ribosomal RNA small subunit methyltransferase H (308 aa).

S-adenosyl-L-methionine-binding positions include 33-35, D52, Y81, D99, and Q106; that span reads GGH.

The protein belongs to the methyltransferase superfamily. RsmH family.

It is found in the cytoplasm. It catalyses the reaction cytidine(1402) in 16S rRNA + S-adenosyl-L-methionine = N(4)-methylcytidine(1402) in 16S rRNA + S-adenosyl-L-homocysteine + H(+). Its function is as follows. Specifically methylates the N4 position of cytidine in position 1402 (C1402) of 16S rRNA. This is Ribosomal RNA small subunit methyltransferase H from Francisella philomiragia subsp. philomiragia (strain ATCC 25017 / CCUG 19701 / FSC 153 / O#319-036).